The following is a 563-amino-acid chain: Phosphomethylpyrimidine synthase (563 aa).

Substrate is bound by residues N180, M209, Y238, H274, 294 to 296, 335 to 338, and E374; these read SRG and DGLR. H378 contributes to the Zn(2+) binding site. Substrate is bound at residue Y401. H442 contacts Zn(2+). [4Fe-4S] cluster-binding residues include C522, C525, and C530.

This sequence belongs to the ThiC family. The cofactor is [4Fe-4S] cluster.

It catalyses the reaction 5-amino-1-(5-phospho-beta-D-ribosyl)imidazole + S-adenosyl-L-methionine = 4-amino-2-methyl-5-(phosphooxymethyl)pyrimidine + CO + 5'-deoxyadenosine + formate + L-methionine + 3 H(+). Its pathway is cofactor biosynthesis; thiamine diphosphate biosynthesis. Catalyzes the synthesis of the hydroxymethylpyrimidine phosphate (HMP-P) moiety of thiamine from aminoimidazole ribotide (AIR) in a radical S-adenosyl-L-methionine (SAM)-dependent reaction. This chain is Phosphomethylpyrimidine synthase, found in Geobacillus thermodenitrificans (strain NG80-2).